The chain runs to 218 residues: GTP cyclohydrolase 1 (218 aa).

Residues Cys109, His112, and Cys180 each contribute to the Zn(2+) site.

The protein belongs to the GTP cyclohydrolase I family. Toroid-shaped homodecamer, composed of two pentamers of five dimers.

The enzyme catalyses GTP + H2O = 7,8-dihydroneopterin 3'-triphosphate + formate + H(+). It functions in the pathway cofactor biosynthesis; 7,8-dihydroneopterin triphosphate biosynthesis; 7,8-dihydroneopterin triphosphate from GTP: step 1/1. This Mannheimia succiniciproducens (strain KCTC 0769BP / MBEL55E) protein is GTP cyclohydrolase 1.